Reading from the N-terminus, the 133-residue chain is Small ribosomal subunit protein bS16 (133 aa).

Residues 83–101 (KRDARSNPKKAEPGKKAQE) are compositionally biased toward basic and acidic residues. Positions 83 to 102 (KRDARSNPKKAEPGKKAQER) are disordered.

The protein belongs to the bacterial ribosomal protein bS16 family.

This Mesorhizobium japonicum (strain LMG 29417 / CECT 9101 / MAFF 303099) (Mesorhizobium loti (strain MAFF 303099)) protein is Small ribosomal subunit protein bS16.